A 353-amino-acid polypeptide reads, in one-letter code: AA9 family lytic polysaccharide monooxygenase A (353 aa).

The N-terminal stretch at 1–19 is a signal peptide; that stretch reads MKSTFGLLALAAAAKMAHA. The Cu(2+) site is built by His20 and His102. Cys62 and Cys183 are joined by a disulfide. His169 lines the O2 pocket. Tyr180 is a Cu(2+) binding site. Residues 266 to 276 are compositionally biased toward low complexity; it reads KPTTTTAAAPA. Residues 266–316 form a disordered region; the sequence is KPTTTTAAAPAETDSCDGDDDDYETETPAPQASATQAPAPQRPAPQTPSGS. Over residues 279 to 290 the composition is skewed to acidic residues; sequence DSCDGDDDDYET. A compositionally biased stretch (low complexity) spans 291–304; sequence ETPAPQASATQAPA. One can recognise a CBM1 domain in the interval 315–351; the sequence is GSVKEWYQCGGINYTGAKNCESGLVCKEWNPYYHQCI. Asn327 is a glycosylation site (N-linked (GlcNAc...) asparagine).

This sequence belongs to the polysaccharide monooxygenase AA9 family. Cu(2+) serves as cofactor.

The protein localises to the secreted. It carries out the reaction [(1-&gt;4)-beta-D-glucosyl]n+m + reduced acceptor + O2 = 4-dehydro-beta-D-glucosyl-[(1-&gt;4)-beta-D-glucosyl]n-1 + [(1-&gt;4)-beta-D-glucosyl]m + acceptor + H2O.. In terms of biological role, lytic polysaccharide monooxygenase (LPMO) that depolymerizes crystalline and amorphous polysaccharides via the oxidation of scissile alpha- or beta-(1-4)-glycosidic bonds, yielding C4 oxidation products. Catalysis by LPMOs requires the reduction of the active-site copper from Cu(II) to Cu(I) by a reducing agent and H(2)O(2) or O(2) as a cosubstrate. This Aspergillus clavatus (strain ATCC 1007 / CBS 513.65 / DSM 816 / NCTC 3887 / NRRL 1 / QM 1276 / 107) protein is AA9 family lytic polysaccharide monooxygenase A (eglD).